The sequence spans 670 residues: DNA ligase (670 aa).

Residues Asp32 to Asp36, Ser81 to Leu82, and Glu114 contribute to the NAD(+) site. The active-site N6-AMP-lysine intermediate is the Lys116. NAD(+)-binding residues include Arg137, Glu174, Lys291, and Lys315. Positions 409, 412, 427, and 433 each coordinate Zn(2+). One can recognise a BRCT domain in the interval Ala592–Arg670.

Belongs to the NAD-dependent DNA ligase family. LigA subfamily. The cofactor is Mg(2+). Mn(2+) serves as cofactor.

The catalysed reaction is NAD(+) + (deoxyribonucleotide)n-3'-hydroxyl + 5'-phospho-(deoxyribonucleotide)m = (deoxyribonucleotide)n+m + AMP + beta-nicotinamide D-nucleotide.. Its function is as follows. DNA ligase that catalyzes the formation of phosphodiester linkages between 5'-phosphoryl and 3'-hydroxyl groups in double-stranded DNA using NAD as a coenzyme and as the energy source for the reaction. It is essential for DNA replication and repair of damaged DNA. This chain is DNA ligase, found in Haemophilus influenzae (strain PittGG).